A 365-amino-acid chain; its full sequence is Peptide chain release factor 2 (365 aa).

At Gln-252 the chain carries N5-methylglutamine.

Belongs to the prokaryotic/mitochondrial release factor family. Methylated by PrmC. Methylation increases the termination efficiency of RF2.

The protein resides in the cytoplasm. Peptide chain release factor 2 directs the termination of translation in response to the peptide chain termination codons UGA and UAA. The chain is Peptide chain release factor 2 from Pasteurella multocida (strain Pm70).